A 163-amino-acid polypeptide reads, in one-letter code: Choriogonadotropin subunit beta (163 aa).

Residues 1 to 20 form the signal peptide; the sequence is MEMLQGLLLCLLLSTGGAWA. Disulfide bonds link cysteine 29-cysteine 76, cysteine 43-cysteine 91, cysteine 46-cysteine 129, cysteine 54-cysteine 107, cysteine 58-cysteine 109, and cysteine 112-cysteine 119. Asparagine 50 carries N-linked (GlcNAc...) asparagine glycosylation. The N-linked (GlcNAc...) asparagine glycan is linked to asparagine 124. Positions 135–151 are enriched in polar residues; that stretch reads QDSSSNVPPSNLTSPSQ. The segment at 135-163 is disordered; it reads QDSSSNVPPSNLTSPSQLLEPAVTPLVPQ. Residue serine 139 is glycosylated (O-linked (GalNAc...) serine). N-linked (GlcNAc...) asparagine glycosylation occurs at asparagine 145. O-linked (GalNAc...) serine glycosylation is present at serine 150.

This sequence belongs to the glycoprotein hormones subunit beta family. As to quaternary structure, heterodimer of a common alpha chain and a unique beta chain which confers biological specificity to thyrotropin, lutropin, follitropin and gonadotropin.

The protein localises to the secreted. Its function is as follows. Stimulates the ovaries to synthesize the steroids that are essential for the maintenance of pregnancy. The sequence is that of Choriogonadotropin subunit beta (CGB) from Saimiri boliviensis boliviensis (Bolivian squirrel monkey).